We begin with the raw amino-acid sequence, 198 residues long: Ribonuclease HII (198 aa).

The RNase H type-2 domain occupies 11-198 (ELIAGVDEVG…SPVRKLLENE (188 aa)). Positions 17, 18, and 109 each coordinate a divalent metal cation.

It belongs to the RNase HII family. Mn(2+) serves as cofactor. It depends on Mg(2+) as a cofactor.

Its subcellular location is the cytoplasm. It catalyses the reaction Endonucleolytic cleavage to 5'-phosphomonoester.. Functionally, endonuclease that specifically degrades the RNA of RNA-DNA hybrids. The chain is Ribonuclease HII from Mannheimia succiniciproducens (strain KCTC 0769BP / MBEL55E).